Reading from the N-terminus, the 206-residue chain is MSSSLSQTSKYQATSVVNGLLSNLLPGVPKIRANNGKTSVNNGSKAQLIDRNLKKRVQLQNRDVHKIKKKCKLVKKKQVKKHKLDKEQLEQLAKHQVLKKHQQEGTLTDHERKYLNKLIKRNSQNLRSWDLEEEVRDELEDIQQSILKDTVSTANTDRSKRRRFKRKQFKEDIKGSDFVKDHRYPGLTPGLAPVGLSDEEDSSEED.

The disordered stretch occupies residues 178–206; the sequence is FVKDHRYPGLTPGLAPVGLSDEEDSSEED. A phosphoserine mark is found at serine 197, serine 202, and serine 203. A compositionally biased stretch (acidic residues) spans 197–206; the sequence is SDEEDSSEED.

It belongs to the RRT14 family.

It is found in the nucleus. The protein resides in the nucleolus. Involved in ribosome biogenesis, probably through modulation of rDNA transcription. The sequence is that of Regulator of rDNA transcription 14 (RRT14) from Saccharomyces cerevisiae (strain RM11-1a) (Baker's yeast).